A 73-amino-acid polypeptide reads, in one-letter code: Biotin/lipoyl attachment protein (73 aa).

The Biotinyl-binding domain maps to 2–69 (TVSIQMAGNL…NEGDVLLELS (68 aa)). Lysine 35 is subject to N6-biotinyllysine; alternate. At lysine 35 the chain carries N6-lipoyllysine; alternate.

Can be both biotinylated and lipoylated on Lys-35 upon overexpression in E.coli depending on the growth medium; the nature of the modification in situ in B.subtilis is unknown.

In Bacillus subtilis (strain 168), this protein is Biotin/lipoyl attachment protein (yngHB).